A 216-amino-acid chain; its full sequence is Gas vesicle protein H (216 aa).

The disordered stretch occupies residues 1–141 (MSPNLNGPGG…IHIETRETDD (141 aa)). The segment covering 15-25 (DRPDEPDDSDR) has biased composition (acidic residues). Composition is skewed to basic and acidic residues over residues 38–51 (PDDRPNKTPDRPSD), 73–84 (DGHRQGHGRIDR), and 107–141 (KPSDEPRVEAPRTEGTDSQPEGEKSIHIETRETDD).

It belongs to the gas vesicle GvpH family. In terms of assembly, gvpF to GvpM interact with each other in vitro, and may form multi-subunit complex(es). Interacts with GvpC. Might interact with GvpA.

It is found in the gas vesicle. Functionally, proteins GvpF to GvpM might be involved in nucleating gas vesicle formation. A minor component of the gas vesicle. Gas vesicles are hollow, gas filled proteinaceous nanostructures found in some microorganisms. They allow positioning of halobacteria at the optimal depth for growth in the poorly aerated, shallow brine pools of their habitat. In terms of biological role, expression of a 9.5 kb mc-vac DNA fragment containing 2 divergently transcribed regions (gvpD-gvpE-gvpF-gvpG-gvpH-gvpI-gvpJ-gvpK-gvpL-gvpM and gvpA-gvpC-gvpN-gvpO) allows H.volcanii to produce gas vesicles. This chain is Gas vesicle protein H, found in Haloferax mediterranei (strain ATCC 33500 / DSM 1411 / JCM 8866 / NBRC 14739 / NCIMB 2177 / R-4) (Halobacterium mediterranei).